A 436-amino-acid chain; its full sequence is Serine hydroxymethyltransferase (436 aa).

Residues L133 and 137–139 contribute to the (6S)-5,6,7,8-tetrahydrofolate site; that span reads GHL. K242 bears the N6-(pyridoxal phosphate)lysine mark. Residue 366 to 368 participates in (6S)-5,6,7,8-tetrahydrofolate binding; it reads SPF.

Belongs to the SHMT family. As to quaternary structure, homodimer. Pyridoxal 5'-phosphate is required as a cofactor.

The protein resides in the cytoplasm. The catalysed reaction is (6R)-5,10-methylene-5,6,7,8-tetrahydrofolate + glycine + H2O = (6S)-5,6,7,8-tetrahydrofolate + L-serine. Its pathway is one-carbon metabolism; tetrahydrofolate interconversion. It participates in amino-acid biosynthesis; glycine biosynthesis; glycine from L-serine: step 1/1. Functionally, catalyzes the reversible interconversion of serine and glycine with tetrahydrofolate (THF) serving as the one-carbon carrier. This reaction serves as the major source of one-carbon groups required for the biosynthesis of purines, thymidylate, methionine, and other important biomolecules. Also exhibits THF-independent aldolase activity toward beta-hydroxyamino acids, producing glycine and aldehydes, via a retro-aldol mechanism. The sequence is that of Serine hydroxymethyltransferase from Novosphingobium aromaticivorans (strain ATCC 700278 / DSM 12444 / CCUG 56034 / CIP 105152 / NBRC 16084 / F199).